We begin with the raw amino-acid sequence, 685 residues long: Protein OCTOPUS (685 aa).

3 disordered regions span residues Met-1–His-34, Arg-152–Glu-202, and Lys-280–Arg-314. Residues Val-179 to Glu-202 show a composition bias toward acidic residues. Residues Lys-280–Arg-291 show a composition bias toward basic residues. A compositionally biased stretch (basic and acidic residues) spans Asn-292–Arg-314. The residue at position 318 (Ser-318) is a Phosphoserine. The interval Val-419 to Arg-471 is disordered. Residues Leu-549 to Glu-578 are a coiled coil. A disordered region spans residues Ser-584–Gly-640. Low complexity predominate over residues Val-601–Ser-611.

The protein belongs to the OCTOPUS family. Interacts with VCC. Phosphorylation at Ser-318 amplifies the promotion of protophloem differentiation. Expressed in provascular cells and phloem initials (e.g. protophloem, metaphloem, sieve element precursor cells and sieve element procambium precursor cells).

The protein resides in the cell membrane. It localises to the cytoplasm. Its function is as follows. Potentiates primary root protophloem differentiation. Required, together with VCC, for embryo provasculature development and cotyledon vascular complexity and connectivity. Regulates roots architecture. Mediates the recruitment of ASK7/BIN2 to the plasma membrane. The sequence is that of Protein OCTOPUS from Arabidopsis thaliana (Mouse-ear cress).